The primary structure comprises 312 residues: Undecaprenyl-diphosphatase (312 aa).

7 helical membrane-spanning segments follow: residues glycine 74–tryptophan 94, valine 122–isoleucine 142, valine 154–glycine 174, leucine 183–valine 203, phenylalanine 226–leucine 246, valine 254–isoleucine 274, and isoleucine 288–valine 308.

It belongs to the UppP family.

The protein localises to the cell inner membrane. The enzyme catalyses di-trans,octa-cis-undecaprenyl diphosphate + H2O = di-trans,octa-cis-undecaprenyl phosphate + phosphate + H(+). Catalyzes the dephosphorylation of undecaprenyl diphosphate (UPP). Confers resistance to bacitracin. The chain is Undecaprenyl-diphosphatase from Trichodesmium erythraeum (strain IMS101).